The chain runs to 110 residues: Nucleoid-associated protein PsycPRwf_1729 (110 aa).

This sequence belongs to the YbaB/EbfC family. In terms of assembly, homodimer.

Its subcellular location is the cytoplasm. The protein resides in the nucleoid. Functionally, binds to DNA and alters its conformation. May be involved in regulation of gene expression, nucleoid organization and DNA protection. The protein is Nucleoid-associated protein PsycPRwf_1729 of Psychrobacter sp. (strain PRwf-1).